Here is an 86-residue protein sequence, read N- to C-terminus: Large ribosomal subunit protein bL31 (86 aa).

The tract at residues 64–86 is disordered; sequence KYGMGSANSSESKDQKEEKDSKK. The segment covering 74–86 has biased composition (basic and acidic residues); it reads ESKDQKEEKDSKK.

This sequence belongs to the bacterial ribosomal protein bL31 family. Type A subfamily. In terms of assembly, part of the 50S ribosomal subunit.

In terms of biological role, binds the 23S rRNA. The sequence is that of Large ribosomal subunit protein bL31 from Prochlorococcus marinus (strain MIT 9301).